The following is a 390-amino-acid chain: Phosphopentomutase (390 aa).

The Mn(2+) site is built by Asp-9, Asp-283, His-288, Asp-324, His-325, and His-336.

This sequence belongs to the phosphopentomutase family. Mn(2+) serves as cofactor.

It localises to the cytoplasm. The catalysed reaction is 2-deoxy-alpha-D-ribose 1-phosphate = 2-deoxy-D-ribose 5-phosphate. It carries out the reaction alpha-D-ribose 1-phosphate = D-ribose 5-phosphate. Its pathway is carbohydrate degradation; 2-deoxy-D-ribose 1-phosphate degradation; D-glyceraldehyde 3-phosphate and acetaldehyde from 2-deoxy-alpha-D-ribose 1-phosphate: step 1/2. In terms of biological role, isomerase that catalyzes the conversion of deoxy-ribose 1-phosphate (dRib-1-P) and ribose 1-phosphate (Rib-1-P) to deoxy-ribose 5-phosphate (dRib-5-P) and ribose 5-phosphate (Rib-5-P), respectively. This chain is Phosphopentomutase, found in Thermotoga petrophila (strain ATCC BAA-488 / DSM 13995 / JCM 10881 / RKU-1).